A 375-amino-acid polypeptide reads, in one-letter code: cAMP-dependent protein kinase regulatory subunit (375 aa).

Residues 28–142 are dimerization and phosphorylation; sequence RFCADYFNER…SLYKSVSHNF (115 aa). Residues 41-50 are compositionally biased toward basic and acidic residues; the sequence is REEADDDGPR. The interval 41–102 is disordered; the sequence is REEADDDGPR…EPAAPFTRRT (62 aa). Over residues 64–82 the composition is skewed to polar residues; the sequence is GSSSRSTDGSLFRSSFADT. Over residues 83–97 the composition is skewed to low complexity; it reads SSEGPGSASSEPAAP. Ser-103 is modified (phosphoserine). Residues 143-258, Glu-208, Arg-217, 261-375, Glu-328, and Arg-337 contribute to the 3',5'-cyclic AMP site; these read LFGN…FLKE and ILSD…DPTK.

The protein belongs to the cAMP-dependent kinase regulatory chain family. Tetramer, composed of 2 regulatory (R) and 2 catalytic (C) subunits. In the presence of cAMP it dissociates into 2 active monomeric C subunits and an R dimer.

The protein is cAMP-dependent protein kinase regulatory subunit (PKAR) of Yarrowia lipolytica (strain CLIB 122 / E 150) (Yeast).